We begin with the raw amino-acid sequence, 380 residues long: Deoxyguanosinetriphosphate triphosphohydrolase-like protein (380 aa).

The interval 1-28 (MYAPYATMPDRSRGRAVPEEESSFRSPF) is disordered. The HD domain occupies 62–198 (RLTHSIEVGQ…AALADDIAYN (137 aa)).

This sequence belongs to the dGTPase family. Type 2 subfamily.

This chain is Deoxyguanosinetriphosphate triphosphohydrolase-like protein, found in Ruegeria sp. (strain TM1040) (Silicibacter sp.).